Here is a 186-residue protein sequence, read N- to C-terminus: ATP synthase subunit b (186 aa).

A helical membrane pass occupies residues 5-25; that stretch reads LILNLLVLLAPAAVFAAGGGH.

The protein belongs to the ATPase B chain family. As to quaternary structure, F-type ATPases have 2 components, F(1) - the catalytic core - and F(0) - the membrane proton channel. F(1) has five subunits: alpha(3), beta(3), gamma(1), delta(1), epsilon(1). F(0) has three main subunits: a(1), b(2) and c(10-14). The alpha and beta chains form an alternating ring which encloses part of the gamma chain. F(1) is attached to F(0) by a central stalk formed by the gamma and epsilon chains, while a peripheral stalk is formed by the delta and b chains.

It is found in the cell inner membrane. F(1)F(0) ATP synthase produces ATP from ADP in the presence of a proton or sodium gradient. F-type ATPases consist of two structural domains, F(1) containing the extramembraneous catalytic core and F(0) containing the membrane proton channel, linked together by a central stalk and a peripheral stalk. During catalysis, ATP synthesis in the catalytic domain of F(1) is coupled via a rotary mechanism of the central stalk subunits to proton translocation. Functionally, component of the F(0) channel, it forms part of the peripheral stalk, linking F(1) to F(0). This is ATP synthase subunit b from Bdellovibrio bacteriovorus (strain ATCC 15356 / DSM 50701 / NCIMB 9529 / HD100).